Reading from the N-terminus, the 372-residue chain is Queuine tRNA-ribosyltransferase (372 aa).

Aspartate 89 functions as the Proton acceptor in the catalytic mechanism. Substrate is bound by residues 89–93, aspartate 161, and glycine 232; that span reads DSGGF. An RNA binding region spans residues 262–268; that stretch reads GIGDLPS. The Nucleophile role is filled by aspartate 281. Residues 286–290 form an RNA binding; important for wobble base 34 recognition region; sequence TKAAR. Zn(2+) contacts are provided by cysteine 319, cysteine 321, cysteine 324, and histidine 351.

This sequence belongs to the queuine tRNA-ribosyltransferase family. As to quaternary structure, homodimer. Within each dimer, one monomer is responsible for RNA recognition and catalysis, while the other monomer binds to the replacement base PreQ1. Zn(2+) is required as a cofactor.

The catalysed reaction is 7-aminomethyl-7-carbaguanine + guanosine(34) in tRNA = 7-aminomethyl-7-carbaguanosine(34) in tRNA + guanine. The protein operates within tRNA modification; tRNA-queuosine biosynthesis. Its function is as follows. Catalyzes the base-exchange of a guanine (G) residue with the queuine precursor 7-aminomethyl-7-deazaguanine (PreQ1) at position 34 (anticodon wobble position) in tRNAs with GU(N) anticodons (tRNA-Asp, -Asn, -His and -Tyr). Catalysis occurs through a double-displacement mechanism. The nucleophile active site attacks the C1' of nucleotide 34 to detach the guanine base from the RNA, forming a covalent enzyme-RNA intermediate. The proton acceptor active site deprotonates the incoming PreQ1, allowing a nucleophilic attack on the C1' of the ribose to form the product. After dissociation, two additional enzymatic reactions on the tRNA convert PreQ1 to queuine (Q), resulting in the hypermodified nucleoside queuosine (7-(((4,5-cis-dihydroxy-2-cyclopenten-1-yl)amino)methyl)-7-deazaguanosine). This chain is Queuine tRNA-ribosyltransferase, found in Chlamydia caviae (strain ATCC VR-813 / DSM 19441 / 03DC25 / GPIC) (Chlamydophila caviae).